The following is a 450-amino-acid chain: ATP-dependent protease ATPase subunit HslU (450 aa).

Residues V29, 71–76 (GVGKTE), D261, E328, and R400 each bind ATP.

It belongs to the ClpX chaperone family. HslU subfamily. In terms of assembly, a double ring-shaped homohexamer of HslV is capped on each side by a ring-shaped HslU homohexamer. The assembly of the HslU/HslV complex is dependent on binding of ATP.

Its subcellular location is the cytoplasm. Its function is as follows. ATPase subunit of a proteasome-like degradation complex; this subunit has chaperone activity. The binding of ATP and its subsequent hydrolysis by HslU are essential for unfolding of protein substrates subsequently hydrolyzed by HslV. HslU recognizes the N-terminal part of its protein substrates and unfolds these before they are guided to HslV for hydrolysis. In Rickettsia peacockii (strain Rustic), this protein is ATP-dependent protease ATPase subunit HslU.